Consider the following 709-residue polypeptide: Probable serine/threonine-protein kinase zyg-1 (709 aa).

The 239-residue stretch at 13–251 (FQNLQQIGQG…LKEIVMTDYV (239 aa)) folds into the Protein kinase domain. Residues 19–27 (IGQGGFGVV) and lysine 41 contribute to the ATP site. Aspartate 130 functions as the Proton acceptor in the catalytic mechanism. Disordered regions lie at residues 254-329 (KMGE…DRAR) and 591-633 (SSSQ…PAAT). 2 stretches are compositionally biased toward basic and acidic residues: residues 262 to 291 (SREHSRDSRSQRSREPFRSSRDGISLERRP) and 302 to 313 (SRRDPDGYRAAH). Residues 607 to 627 (PLSSRTTSSLNVRNGVSSDEN) are compositionally biased toward polar residues.

It belongs to the protein kinase superfamily. Ser/Thr protein kinase family.

It localises to the cytoplasm. Its subcellular location is the cytoskeleton. The protein localises to the microtubule organizing center. The protein resides in the centrosome. It is found in the centriole. It catalyses the reaction L-seryl-[protein] + ATP = O-phospho-L-seryl-[protein] + ADP + H(+). The enzyme catalyses L-threonyl-[protein] + ATP = O-phospho-L-threonyl-[protein] + ADP + H(+). In terms of biological role, protein kinase that plays a central role in centrosome duplication. Paternal copy is required to regulate synthesis of daughter centrioles prior to fertilization. Maternal copy regulates centrosome duplication during later cell cycles. Functions upstream of sas-5 and sas-6, and is required for their localization to the centrosome. The protein is Probable serine/threonine-protein kinase zyg-1 (zyg-1) of Caenorhabditis briggsae.